The primary structure comprises 474 residues: tRNA-2-methylthio-N(6)-dimethylallyladenosine synthase (474 aa).

Residues 3 to 120 enclose the MTTase N-terminal domain; that stretch reads KKLHIKTWGC…LPEMINSVRG (118 aa). 6 residues coordinate [4Fe-4S] cluster: Cys-12, Cys-49, Cys-83, Cys-157, Cys-161, and Cys-164. The 236-residue stretch at 143-378 folds into the Radical SAM core domain; that stretch reads RADGPSAFVS…INQQVTAWSR (236 aa). The TRAM domain occupies 378 to 441; the sequence is RRMLGTTQRI…TNSMRGKVVR (64 aa).

Belongs to the methylthiotransferase family. MiaB subfamily. As to quaternary structure, monomer. It depends on [4Fe-4S] cluster as a cofactor.

The protein resides in the cytoplasm. It carries out the reaction N(6)-dimethylallyladenosine(37) in tRNA + (sulfur carrier)-SH + AH2 + 2 S-adenosyl-L-methionine = 2-methylsulfanyl-N(6)-dimethylallyladenosine(37) in tRNA + (sulfur carrier)-H + 5'-deoxyadenosine + L-methionine + A + S-adenosyl-L-homocysteine + 2 H(+). Its function is as follows. Catalyzes the methylthiolation of N6-(dimethylallyl)adenosine (i(6)A), leading to the formation of 2-methylthio-N6-(dimethylallyl)adenosine (ms(2)i(6)A) at position 37 in tRNAs that read codons beginning with uridine. In Enterobacter sp. (strain 638), this protein is tRNA-2-methylthio-N(6)-dimethylallyladenosine synthase.